The primary structure comprises 104 residues: UPF0213 protein ORF82 (104 aa).

Positions 7–83 (KVWCVYIVRR…KRKRGKYFKL (77 aa)) constitute a GIY-YIG domain.

Belongs to the UPF0213 family.

This Orgyia pseudotsugata (Douglas-fir tussock moth) protein is UPF0213 protein ORF82.